A 291-amino-acid chain; its full sequence is Acetylglutamate kinase (291 aa).

Substrate is bound by residues 64–65, Arg-86, and Asn-190; that span reads GG.

It belongs to the acetylglutamate kinase family. ArgB subfamily.

It localises to the cytoplasm. The catalysed reaction is N-acetyl-L-glutamate + ATP = N-acetyl-L-glutamyl 5-phosphate + ADP. It functions in the pathway amino-acid biosynthesis; L-arginine biosynthesis; N(2)-acetyl-L-ornithine from L-glutamate: step 2/4. In terms of biological role, catalyzes the ATP-dependent phosphorylation of N-acetyl-L-glutamate. The protein is Acetylglutamate kinase of Leptospira borgpetersenii serovar Hardjo-bovis (strain JB197).